Here is a 150-residue protein sequence, read N- to C-terminus: Large ribosomal subunit protein bL9 (150 aa).

The protein belongs to the bacterial ribosomal protein bL9 family.

Its function is as follows. Binds to the 23S rRNA. This Polynucleobacter necessarius subsp. necessarius (strain STIR1) protein is Large ribosomal subunit protein bL9.